The primary structure comprises 235 residues: Regulator of G-protein signaling 18 (235 aa).

Residue S49 is modified to Phosphoserine. The region spanning 86 to 202 (SFDKLLSHRD…LKSDIYLDLM (117 aa)) is the RGS domain. Phosphoserine is present on residues S216 and S218.

In terms of tissue distribution, expressed in peripheral leukocytes, bone marrow, platelet, spleen and fetal liver.

It is found in the cytoplasm. Inhibits signal transduction by increasing the GTPase activity of G protein alpha subunits thereby driving them into their inactive GDP-bound form. Binds to G(i) alpha-1, G(i) alpha-2, G(i) alpha-3 and G(q) alpha. The chain is Regulator of G-protein signaling 18 (RGS18) from Homo sapiens (Human).